The chain runs to 208 residues: MTDVLVLYYSSYGHVETMAAAVAQGAREAGARVAVRRVPELVPEAVAERAGYKQDQRAPVATVGELADYDAIIIGTPTRFGNMASQMKNFLDQTGGLWAEDRLVGKVGSVFTSTGSQHGGQETTIQSTHTVLLHLGMIVVGLPYSFKGQMRMDEITGGSPYGASTLADDGDGGDRQPSANELDGARFQGRHVAEIAAALVAGRKREAA.

The Flavodoxin-like domain occupies 4-192; sequence VLVLYYSSYG…DGARFQGRHV (189 aa). Residues 10–15 and 78–80 each bind FMN; these read SSYGHV and TRF. Position 12 (Tyr-12) interacts with NAD(+). Residue Trp-98 coordinates substrate. Residues 113-119 and His-134 contribute to the FMN site; that span reads STGSQHG. The segment at 161–183 is disordered; sequence YGASTLADDGDGGDRQPSANELD.

The protein belongs to the WrbA family. It depends on FMN as a cofactor.

It carries out the reaction a quinone + NADH + H(+) = a quinol + NAD(+). The catalysed reaction is a quinone + NADPH + H(+) = a quinol + NADP(+). In Paracoccus denitrificans (strain Pd 1222), this protein is NAD(P)H dehydrogenase (quinone).